We begin with the raw amino-acid sequence, 283 residues long: Pantothenate synthetase (283 aa).

30–37 (MGNLHDGH) contributes to the ATP binding site. The active-site Proton donor is the H37. Q61 serves as a coordination point for (R)-pantoate. Position 61 (Q61) interacts with beta-alanine. Position 149-152 (149-152 (GEKD)) interacts with ATP. Position 155 (Q155) interacts with (R)-pantoate. 186–189 (LSSR) provides a ligand contact to ATP.

This sequence belongs to the pantothenate synthetase family. In terms of assembly, homodimer.

The protein resides in the cytoplasm. The enzyme catalyses (R)-pantoate + beta-alanine + ATP = (R)-pantothenate + AMP + diphosphate + H(+). It functions in the pathway cofactor biosynthesis; (R)-pantothenate biosynthesis; (R)-pantothenate from (R)-pantoate and beta-alanine: step 1/1. Functionally, catalyzes the condensation of pantoate with beta-alanine in an ATP-dependent reaction via a pantoyl-adenylate intermediate. The protein is Pantothenate synthetase of Escherichia coli O45:K1 (strain S88 / ExPEC).